The sequence spans 104 residues: uncharacterized protein (104 aa).

It to A.aeolicus AQ_377.

This is an uncharacterized protein from Archaeoglobus fulgidus (strain ATCC 49558 / DSM 4304 / JCM 9628 / NBRC 100126 / VC-16).